We begin with the raw amino-acid sequence, 265 residues long: Synaptoporin (265 aa).

The Cytoplasmic segment spans residues methionine 1–valine 4. The region spanning methionine 1–glycine 202 is the MARVEL domain. A helical transmembrane segment spans residues isoleucine 5–leucine 25. Over arginine 26–phenylalanine 81 the chain is Vesicular. N-linked (GlcNAc...) asparagine glycosylation is found at asparagine 33 and asparagine 38. The helical transmembrane segment at phenylalanine 82–phenylalanine 102 threads the bilayer. The Cytoplasmic segment spans residues phenylalanine 103–proline 114. Residues leucine 115–tryptophan 135 traverse the membrane as a helical segment. Residues alanine 136–asparagine 177 are Vesicular-facing. Residues threonine 178–phenylalanine 198 form a helical membrane-spanning segment. At lysine 199 to isoleucine 265 the chain is on the cytoplasmic side. 5 repeat units span residues tyrosine 210 to proline 214, tyrosine 222 to arginine 226, tyrosine 227 to serine 231, tyrosine 232 to glycine 236, and tyrosine 238 to alanine 242. The segment at tyrosine 210–alanine 242 is 5 X approximate repeats. Serine 212 is modified (phosphoserine). Residues serine 221–glutamate 230 show a composition bias toward polar residues. A disordered region spans residues serine 221–isoleucine 265. Residues glutamine 240 to isoleucine 265 show a composition bias toward polar residues.

It belongs to the synaptophysin/synaptobrevin family.

Its subcellular location is the cytoplasmic vesicle. The protein localises to the secretory vesicle. It localises to the synaptic vesicle membrane. It is found in the synapse. The protein resides in the synaptosome. Its function is as follows. Intrinsic membrane protein of small synaptic vesicles. Probable vesicular channel protein. This is Synaptoporin (Synpr) from Mus musculus (Mouse).